Consider the following 45-residue polypeptide: NLR family pyrin domain-containing protein 2B (45 aa).

As to expression, expressed in all tissues tested, including spleen, lymph node, thymus, tonsil, peripheral blood leukocyte, bone marrow, liver, heart, brain, placenta, lung, skeletal muscle, kidney and pancreas.

The protein localises to the cytoplasm. The protein resides in the nucleus. Its function is as follows. May function as a negative regulator of NF-kappa-B by preventing RELA/p65 phosphorylation at 'Ser-536', thereby inhibiting its transcriptional activity. Through NF-kappa-B regulation may control cytokine release upon Toll-like receptors activation and therefore play a role in modulation of innate immunity. May also play a role in cell cycle progression and apoptotic process. The protein is NLR family pyrin domain-containing protein 2B of Homo sapiens (Human).